The sequence spans 167 residues: Peptide deformylase (167 aa).

Fe cation-binding residues include C90 and H132. E133 is an active-site residue. Fe cation is bound at residue H136.

It belongs to the polypeptide deformylase family. It depends on Fe(2+) as a cofactor.

It catalyses the reaction N-terminal N-formyl-L-methionyl-[peptide] + H2O = N-terminal L-methionyl-[peptide] + formate. Removes the formyl group from the N-terminal Met of newly synthesized proteins. Requires at least a dipeptide for an efficient rate of reaction. N-terminal L-methionine is a prerequisite for activity but the enzyme has broad specificity at other positions. This Dehalococcoides mccartyi (strain ATCC BAA-2100 / JCM 16839 / KCTC 5957 / BAV1) protein is Peptide deformylase.